The chain runs to 126 residues: Fluoride-specific ion channel FluC (126 aa).

A run of 4 helical transmembrane segments spans residues 4–24 (SLLSIACGAVLGAWLRWFVGL), 35–55 (LGTILVNLVGGFIIGFAIALF), 67–87 (FVITGFCGALTTFSTFSAEVI), and 97–117 (FAIALITIHLMGSLLCTVLGL). Residues Gly74 and Thr77 each coordinate Na(+).

This sequence belongs to the fluoride channel Fluc/FEX (TC 1.A.43) family.

The protein localises to the cell inner membrane. It catalyses the reaction fluoride(in) = fluoride(out). Its activity is regulated as follows. Na(+) is not transported, but it plays an essential structural role and its presence is essential for fluoride channel function. Fluoride-specific ion channel. Important for reducing fluoride concentration in the cell, thus reducing its toxicity. This chain is Fluoride-specific ion channel FluC, found in Acinetobacter baylyi (strain ATCC 33305 / BD413 / ADP1).